Here is a 335-residue protein sequence, read N- to C-terminus: ATP-dependent 6-phosphofructokinase (335 aa).

Gly11 is a binding site for ATP. 21 to 25 lines the ADP pocket; that stretch reads RAVVR. Residues 72-73 and 102-105 each bind ATP; these read RY and GDGS. Asp103 is a binding site for Mg(2+). Substrate is bound at residue 125–127; that stretch reads TID. Asp127 functions as the Proton acceptor in the catalytic mechanism. Residue Arg154 participates in ADP binding. Substrate-binding positions include Arg162 and 169-171; that span reads MGR. ADP contacts are provided by residues 185 to 187 and 213 to 215; these read GAD and KKH. Residues Glu222, Arg244, and 250–253 each bind substrate; that span reads HIQR.

Belongs to the phosphofructokinase type A (PFKA) family. ATP-dependent PFK group I subfamily. Prokaryotic clade 'B1' sub-subfamily. In terms of assembly, homotetramer. It depends on Mg(2+) as a cofactor.

It localises to the cytoplasm. It carries out the reaction beta-D-fructose 6-phosphate + ATP = beta-D-fructose 1,6-bisphosphate + ADP + H(+). Its pathway is carbohydrate degradation; glycolysis; D-glyceraldehyde 3-phosphate and glycerone phosphate from D-glucose: step 3/4. Allosterically activated by ADP and other diphosphonucleosides, and allosterically inhibited by phosphoenolpyruvate. In terms of biological role, catalyzes the phosphorylation of D-fructose 6-phosphate to fructose 1,6-bisphosphate by ATP, the first committing step of glycolysis. In Streptococcus pneumoniae (strain CGSP14), this protein is ATP-dependent 6-phosphofructokinase.